A 206-amino-acid chain; its full sequence is Ribosomal RNA small subunit methyltransferase G (206 aa).

S-adenosyl-L-methionine-binding positions include G74, L79, 125–126 (VE), and R140.

Belongs to the methyltransferase superfamily. RNA methyltransferase RsmG family.

The protein resides in the cytoplasm. The catalysed reaction is guanosine(527) in 16S rRNA + S-adenosyl-L-methionine = N(7)-methylguanosine(527) in 16S rRNA + S-adenosyl-L-homocysteine. Specifically methylates the N7 position of guanine in position 527 of 16S rRNA. This Shewanella oneidensis (strain ATCC 700550 / JCM 31522 / CIP 106686 / LMG 19005 / NCIMB 14063 / MR-1) protein is Ribosomal RNA small subunit methyltransferase G.